Consider the following 689-residue polypeptide: DNA ligase (689 aa).

Residues 40–44 (DSEYD), 89–90 (SL), and E121 contribute to the NAD(+) site. Catalysis depends on K123, which acts as the N6-AMP-lysine intermediate. Residues R144, E179, K295, and K319 each coordinate NAD(+). The Zn(2+) site is built by C413, C416, C431, and C437. Positions 610 to 689 (REQNILTGKI…VEWLAFIKNA (80 aa)) constitute a BRCT domain.

Belongs to the NAD-dependent DNA ligase family. LigA subfamily. Mg(2+) is required as a cofactor. The cofactor is Mn(2+).

It carries out the reaction NAD(+) + (deoxyribonucleotide)n-3'-hydroxyl + 5'-phospho-(deoxyribonucleotide)m = (deoxyribonucleotide)n+m + AMP + beta-nicotinamide D-nucleotide.. Functionally, DNA ligase that catalyzes the formation of phosphodiester linkages between 5'-phosphoryl and 3'-hydroxyl groups in double-stranded DNA using NAD as a coenzyme and as the energy source for the reaction. It is essential for DNA replication and repair of damaged DNA. This chain is DNA ligase, found in Rickettsia prowazekii (strain Madrid E).